A 501-amino-acid polypeptide reads, in one-letter code: MEKPNPRRPSNSVLPYETPRLRDHYLLGKKLGQGQFGTTYLCTEKSSSANYACKSIPKRKLVCREDYEDVWREIQIMHHLSEHPNVVRIKGTYEDSVFVHIVMEVCEGGELFDRIVSKGCFSEREAAKLIKTILGVVEACHSLGVMHRDLKPENFLFDSPSDDAKLKATDFGLSVFYKPGQYLYDVVGSPYYVAPEVLKKCYGPEIDVWSAGVILYILLSGVPPFWAETESGIFRQILQGKIDFKSDPWPTISEGAKDLIYKMLDRSPKKRISAHEALCHPWIVDEHAAPDKPLDPAVLSRLKQFSQMNKIKKMALRVIAERLSEEEIGGLKELFKMIDTDNSGTITFEELKAGLKRVGSELMESEIKSLMDAADIDNSGTIDYGEFLAATLHINKMEREENLVVAFSYFDKDGSGYITIDELQQACTEFGLCDTPLDDMIKEIDLDNDGKIDFSEFTAMMKKGDGVGRSRTMRNNLNFNIAEAFGVEDTSSTAKSDDSPK.

One can recognise a Protein kinase domain in the interval 25-283; it reads YLLGKKLGQG…AHEALCHPWI (259 aa). ATP is bound by residues 31 to 39 and Lys54; that span reads LGQGQFGTT. The active-site Proton acceptor is the Asp149. Position 189 is a phosphoserine (Ser189). Residues 289 to 319 are autoinhibitory domain; the sequence is APDKPLDPAVLSRLKQFSQMNKIKKMALRVI. EF-hand domains follow at residues 326-361, 362-397, 398-433, and 437-467; these read EEIG…VGSE, LMES…INKM, EREE…FGLC, and LDDM…GDGV. Positions 339, 341, 343, 345, 350, 375, 377, 379, 381, 386, 411, 413, 415, 417, 422, 445, 447, 449, 451, and 456 each coordinate Ca(2+).

It belongs to the protein kinase superfamily. Ser/Thr protein kinase family. CDPK subfamily. As to quaternary structure, interacts with Di19.

The protein localises to the cytoplasm. The protein resides in the nucleus. It carries out the reaction L-seryl-[protein] + ATP = O-phospho-L-seryl-[protein] + ADP + H(+). It catalyses the reaction L-threonyl-[protein] + ATP = O-phospho-L-threonyl-[protein] + ADP + H(+). Its activity is regulated as follows. Activated by calcium. Autophosphorylation may play an important role in the regulation of the kinase activity. In terms of biological role, may play a role in signal transduction pathways that involve calcium as a second messenger. Functions as a regulator of the calcium-mediated abscisic acid (ABA) signaling pathway. Phosphorylates ABA-responsive transcription factors ABF1 and ABF4 in vitro. Phosphorylates the nuclear zinc finger Di19 in vitro. This is Calcium-dependent protein kinase 4 (CPK4) from Arabidopsis thaliana (Mouse-ear cress).